The sequence spans 419 residues: Ribosome biogenesis protein NOP53 (419 aa).

2 disordered regions span residues 1 to 21 (MGIKERNAPSQYKQSSRKNKR) and 233 to 283 (KAFE…KIRQ). Residues 233 to 261 (KAFEDKGLVSDQDVNHSIDSDDQSEHEQA) are compositionally biased toward basic and acidic residues. 4 positions are modified to phosphoserine: serine 242, serine 249, serine 252, and serine 256. Basic residues predominate over residues 269 to 283 (KNKRKTRSQRNKIRQ).

This sequence belongs to the NOP53 family.

It is found in the nucleus. The protein localises to the nucleolus. It localises to the nucleoplasm. Functionally, may play a role in ribosome biogenesis. In Schizosaccharomyces pombe (strain 972 / ATCC 24843) (Fission yeast), this protein is Ribosome biogenesis protein NOP53.